Reading from the N-terminus, the 533-residue chain is 2,3-bisphosphoglycerate-independent phosphoglycerate mutase (533 aa).

D15 and S65 together coordinate Mn(2+). Catalysis depends on S65, which acts as the Phosphoserine intermediate. Substrate-binding positions include H126, 156–157 (RD), R188, R194, 258–261 (RPDR), and K331. Mn(2+) contacts are provided by D398, H402, D439, H440, and H457.

It belongs to the BPG-independent phosphoglycerate mutase family. In terms of assembly, monomer. It depends on Mn(2+) as a cofactor.

It catalyses the reaction (2R)-2-phosphoglycerate = (2R)-3-phosphoglycerate. It functions in the pathway carbohydrate degradation; glycolysis; pyruvate from D-glyceraldehyde 3-phosphate: step 3/5. Catalyzes the interconversion of 2-phosphoglycerate and 3-phosphoglycerate. The chain is 2,3-bisphosphoglycerate-independent phosphoglycerate mutase from Trichormus variabilis (strain ATCC 29413 / PCC 7937) (Anabaena variabilis).